Here is a 493-residue protein sequence, read N- to C-terminus: Intermediate cleaving peptidase 55, mitochondrial (493 aa).

Residues methionine 1–serine 19 constitute a mitochondrion transit peptide. Residues aspartate 296, aspartate 307, histidine 383, glutamate 410, and glutamate 433 each contribute to the Mn(2+) site.

Belongs to the peptidase M24B family. It depends on Mn(2+) as a cofactor.

The protein resides in the mitochondrion. The protein localises to the nucleus. Aminopeptidase which cleaves preprotein intermediates that carry destabilizing N-ter amino acid residues after the mitochondrial processing peptidase (MPP) cleavage site and is thus critical for stabilization of the mitochondrial proteome. This chain is Intermediate cleaving peptidase 55, mitochondrial, found in Arabidopsis thaliana (Mouse-ear cress).